The chain runs to 388 residues: Xylose isomerase (388 aa).

Active-site residues include H54 and D57. 7 residues coordinate Mg(2+): E181, E217, H220, D245, D255, D257, and D287.

This sequence belongs to the xylose isomerase family. As to quaternary structure, homotetramer. Requires Mg(2+) as cofactor.

It is found in the cytoplasm. It carries out the reaction alpha-D-xylose = alpha-D-xylulofuranose. Involved in D-xylose catabolism. The polypeptide is Xylose isomerase (xylA) (Streptomyces rubiginosus).